The chain runs to 368 residues: Alanine racemase (368 aa).

Lysine 35 acts as the Proton acceptor; specific for D-alanine in catalysis. Residue lysine 35 is modified to N6-(pyridoxal phosphate)lysine. Arginine 130 is a binding site for substrate. Tyrosine 253 acts as the Proton acceptor; specific for L-alanine in catalysis. Residue methionine 305 coordinates substrate.

Belongs to the alanine racemase family. Pyridoxal 5'-phosphate serves as cofactor.

The enzyme catalyses L-alanine = D-alanine. Its pathway is amino-acid biosynthesis; D-alanine biosynthesis; D-alanine from L-alanine: step 1/1. Functionally, catalyzes the interconversion of L-alanine and D-alanine. May also act on other amino acids. The polypeptide is Alanine racemase (alr) (Cupriavidus metallidurans (strain ATCC 43123 / DSM 2839 / NBRC 102507 / CH34) (Ralstonia metallidurans)).